Reading from the N-terminus, the 442-residue chain is GTPase Der (442 aa).

EngA-type G domains are found at residues proline 3–valine 167 and proline 177–methionine 350. GTP-binding positions include glycine 9–serine 16, aspartate 56–phenylalanine 60, asparagine 119–glutamate 122, glycine 183–serine 190, aspartate 230–leucine 234, and asparagine 295–aspartate 298. Residues valine 351–histidine 435 enclose the KH-like domain.

This sequence belongs to the TRAFAC class TrmE-Era-EngA-EngB-Septin-like GTPase superfamily. EngA (Der) GTPase family. Associates with the 50S ribosomal subunit.

GTPase that plays an essential role in the late steps of ribosome biogenesis. The protein is GTPase Der of Aromatoleum aromaticum (strain DSM 19018 / LMG 30748 / EbN1) (Azoarcus sp. (strain EbN1)).